Here is a 96-residue protein sequence, read N- to C-terminus: ESAT-6-like protein SAG0230 (96 aa).

Belongs to the WXG100 family. sagEsxA-like subfamily. In terms of assembly, homodimer.

The chain is ESAT-6-like protein SAG0230 from Streptococcus agalactiae serotype V (strain ATCC BAA-611 / 2603 V/R).